Reading from the N-terminus, the 968-residue chain is Sorting nexin-13 (968 aa).

The PXA domain maps to 97–284 (ANIIDEPLQQ…YVIWMIRDSN (188 aa)). In terms of domain architecture, RGS spans 373–496 (PLDSILVDNV…RKVYELMLRD (124 aa)). Residues 570 to 691 (YADYDPYAVA…DFLENKAYSK (122 aa)) enclose the PX domain. R612, S614, K639, and R653 together coordinate a 1,2-diacyl-sn-glycero-3-phospho-(1D-myo-inositol-3-phosphate).

It belongs to the sorting nexin family.

It is found in the early endosome membrane. In terms of biological role, may be involved in several stages of intracellular trafficking. May play a role in endosome homeostasis. Acts as a GAP for Galphas. The chain is Sorting nexin-13 (SNX13) from Homo sapiens (Human).